The sequence spans 268 residues: L-cystine-binding protein TcyA (268 aa).

An N-terminal signal peptide occupies residues 1 to 19; sequence MKKALLALFMVVSIAALAA. C20 carries N-palmitoyl cysteine lipidation. Residue C20 is the site of S-diacylglycerol cysteine attachment.

This sequence belongs to the bacterial solute-binding protein 3 family. The complex is composed of two ATP-binding proteins (TcyC), two transmembrane proteins (TcyB) and a solute-binding protein (TcyA).

It is found in the cell membrane. In terms of biological role, part of the ABC transporter complex TcyABC involved in L-cystine import. The protein is L-cystine-binding protein TcyA (tcyA) of Bacillus subtilis (strain 168).